A 228-amino-acid chain; its full sequence is ATP synthase subunit a 2 (228 aa).

6 helical membrane passes run 16–36, 74–94, 103–123, 139–159, 173–193, and 194–214; these read VGTTVVTTWGIMVVLSLGAWL, VFPFVATLWLFIGIANLSSLI, DLSATTALALLVFFSVHWFGI, SPFLLPFHVIGEITRTLALAV, LLVLLVAGLFAPIPLLMLHIV, and EALVQAYIFGMLTLVYIAGAI.

This sequence belongs to the ATPase A chain family. In terms of assembly, F-type ATPases have 2 components, CF(1) - the catalytic core - and CF(0) - the membrane proton channel. CF(1) has five subunits: alpha(3), beta(3), gamma(1), delta(1), epsilon(1). CF(0) has three main subunits: a(1), b(2) and c(9-12). The alpha and beta chains form an alternating ring which encloses part of the gamma chain. CF(1) is attached to CF(0) by a central stalk formed by the gamma and epsilon chains, while a peripheral stalk is formed by the delta and b chains.

The protein resides in the cell inner membrane. Functionally, key component of the proton channel; it plays a direct role in the translocation of protons across the membrane. This is ATP synthase subunit a 2 from Pelobacter propionicus (strain DSM 2379 / NBRC 103807 / OttBd1).